The following is an 84-amino-acid chain: uncharacterized protein (84 aa).

This is an uncharacterized protein from Azorhizobium caulinodans (strain ATCC 43989 / DSM 5975 / JCM 20966 / LMG 6465 / NBRC 14845 / NCIMB 13405 / ORS 571).